A 309-amino-acid polypeptide reads, in one-letter code: Elongation factor Ts (309 aa).

An involved in Mg(2+) ion dislocation from EF-Tu region spans residues 82–85; that stretch reads TDFV.

It belongs to the EF-Ts family.

The protein resides in the cytoplasm. Functionally, associates with the EF-Tu.GDP complex and induces the exchange of GDP to GTP. It remains bound to the aminoacyl-tRNA.EF-Tu.GTP complex up to the GTP hydrolysis stage on the ribosome. The chain is Elongation factor Ts from Rickettsia bellii (strain OSU 85-389).